A 203-amino-acid chain; its full sequence is Endo-type membrane-bound lytic murein transglycosylase A (203 aa).

A signal peptide spans 1 to 15 (MKLRWFAFLVVLLAG). Cys-16 carries the N-palmitoyl cysteine lipid modification. Cys-16 carries S-diacylglycerol cysteine lipidation.

It belongs to the transglycosylase Slt family.

It is found in the cell outer membrane. The catalysed reaction is Endolytic cleavage of the (1-&gt;4)-beta-glycosidic linkage between N-acetylmuramic acid (MurNAc) and N-acetylglucosamine (GlcNAc) residues in peptidoglycan with concomitant formation of a 1,6-anhydrobond in the MurNAc residue.. Its function is as follows. Murein-degrading enzyme. May play a role in recycling of muropeptides during cell elongation and/or cell division. Preferentially cleaves at a distance of more than two disaccharide units from the ends of the glycan chain. This is Endo-type membrane-bound lytic murein transglycosylase A from Escherichia fergusonii (strain ATCC 35469 / DSM 13698 / CCUG 18766 / IAM 14443 / JCM 21226 / LMG 7866 / NBRC 102419 / NCTC 12128 / CDC 0568-73).